The following is a 266-amino-acid chain: Protein YdcF (266 aa).

It to S.coelicolor SCO4629. In terms of assembly, monomer.

In terms of biological role, binds S-adenosyl-L-methionine (AdoMet). The polypeptide is Protein YdcF (ydcF) (Escherichia coli (strain K12)).